The sequence spans 426 residues: Histidinol dehydrogenase (426 aa).

3 residues coordinate NAD(+): Tyr-130, Gln-187, and Asn-210. Residues Ser-233, Gln-255, and His-258 each contribute to the substrate site. Residues Gln-255 and His-258 each contribute to the Zn(2+) site. Catalysis depends on proton acceptor residues Glu-323 and His-324. The substrate site is built by His-324, Asp-357, Glu-411, and His-416. Residue Asp-357 coordinates Zn(2+). A Zn(2+)-binding site is contributed by His-416.

Belongs to the histidinol dehydrogenase family. Zn(2+) serves as cofactor.

It catalyses the reaction L-histidinol + 2 NAD(+) + H2O = L-histidine + 2 NADH + 3 H(+). Its pathway is amino-acid biosynthesis; L-histidine biosynthesis; L-histidine from 5-phospho-alpha-D-ribose 1-diphosphate: step 9/9. Its function is as follows. Catalyzes the sequential NAD-dependent oxidations of L-histidinol to L-histidinaldehyde and then to L-histidine. The chain is Histidinol dehydrogenase (hisD) from Aquifex aeolicus (strain VF5).